The following is a 916-amino-acid chain: Isoleucine--tRNA ligase (916 aa).

The short motif at 57-67 is the 'HIGH' region element; the sequence is PYANGNLHMGH. E554 contributes to the L-isoleucyl-5'-AMP binding site. Positions 595-599 match the 'KMSKS' region motif; sequence KMSKS. K598 is a binding site for ATP. The Zn(2+) site is built by C885, C888, C905, and C908.

Belongs to the class-I aminoacyl-tRNA synthetase family. IleS type 1 subfamily. In terms of assembly, monomer. It depends on Zn(2+) as a cofactor.

The protein resides in the cytoplasm. The catalysed reaction is tRNA(Ile) + L-isoleucine + ATP = L-isoleucyl-tRNA(Ile) + AMP + diphosphate. In terms of biological role, catalyzes the attachment of isoleucine to tRNA(Ile). As IleRS can inadvertently accommodate and process structurally similar amino acids such as valine, to avoid such errors it has two additional distinct tRNA(Ile)-dependent editing activities. One activity is designated as 'pretransfer' editing and involves the hydrolysis of activated Val-AMP. The other activity is designated 'posttransfer' editing and involves deacylation of mischarged Val-tRNA(Ile). In Staphylococcus epidermidis (strain ATCC 12228 / FDA PCI 1200), this protein is Isoleucine--tRNA ligase.